The chain runs to 201 residues: Recombination protein RecR (201 aa).

Residues 57–72 (CADCRTFTEQEVCNIC) form a C4-type zinc finger. The Toprim domain occupies 81-176 (GQICVVESPA…DASRIAHGVP (96 aa)).

The protein belongs to the RecR family.

Functionally, may play a role in DNA repair. It seems to be involved in an RecBC-independent recombinational process of DNA repair. It may act with RecF and RecO. This chain is Recombination protein RecR, found in Klebsiella pneumoniae subsp. pneumoniae (strain ATCC 700721 / MGH 78578).